We begin with the raw amino-acid sequence, 647 residues long: Chaperone protein HtpG (647 aa).

The segment at Met1–Arg353 is a; substrate-binding. The interval Glu354–Arg567 is b. Residues Ile568–Leu647 form a c region.

The protein belongs to the heat shock protein 90 family. Homodimer.

The protein resides in the cytoplasm. Functionally, molecular chaperone. Has ATPase activity. This is Chaperone protein HtpG from Mycobacterium bovis (strain ATCC BAA-935 / AF2122/97).